The following is a 141-amino-acid chain: Vesicle-associated membrane protein 4 (141 aa).

Residues 1 to 51 (MPPKFKRHLNDDDVTGSVKSERRNLLEDDSDEEEDFFLRGPSGPRFGPRND) are disordered. Over 1-115 (MPPKFKRHLN…RRQMWWRGCK (115 aa)) the chain is Cytoplasmic. Phosphoserine is present on residues Ser-17 and Ser-30. The v-SNARE coiled-coil homology domain maps to 52–112 (KIKHVQNQVD…KQLRRQMWWR (61 aa)). Residues 116 to 136 (IKAIMALVAAILLLVIIILIV) form a helical; Anchor for type IV membrane protein membrane-spanning segment. The Vesicular portion of the chain corresponds to 137–141 (MKYRT).

It belongs to the synaptobrevin family. As to quaternary structure, identified in a complex containing STX6, STX12, VAMP4 and VTI1A. Interacts with BAIAP3; this interaction is increased in the presence of calcium.

Its subcellular location is the golgi apparatus. The protein localises to the trans-Golgi network membrane. In terms of biological role, involved in the pathway that functions to remove an inhibitor (probably synaptotagmin-4) of calcium-triggered exocytosis during the maturation of secretory granules. May be a marker for this sorting pathway that is critical for remodeling the secretory response of granule. The polypeptide is Vesicle-associated membrane protein 4 (VAMP4) (Homo sapiens (Human)).